The sequence spans 202 residues: Ribonuclease HII (202 aa).

The RNase H type-2 domain maps to 11 to 200 (GLIAGVDEVG…VRKAIEEFNR (190 aa)). Residues Asp-17, Glu-18, and Asp-109 each coordinate a divalent metal cation.

The protein belongs to the RNase HII family. Mn(2+) is required as a cofactor. The cofactor is Mg(2+).

The protein localises to the cytoplasm. It catalyses the reaction Endonucleolytic cleavage to 5'-phosphomonoester.. Functionally, endonuclease that specifically degrades the RNA of RNA-DNA hybrids. The protein is Ribonuclease HII of Actinobacillus succinogenes (strain ATCC 55618 / DSM 22257 / CCUG 43843 / 130Z).